A 901-amino-acid polypeptide reads, in one-letter code: Aconitate hydratase A (901 aa).

3 residues coordinate [4Fe-4S] cluster: cysteine 443, cysteine 509, and cysteine 512.

The protein belongs to the aconitase/IPM isomerase family. In terms of assembly, monomer. The cofactor is [4Fe-4S] cluster.

The enzyme catalyses citrate = D-threo-isocitrate. It carries out the reaction (2S,3R)-3-hydroxybutane-1,2,3-tricarboxylate = 2-methyl-cis-aconitate + H2O. The protein operates within carbohydrate metabolism; tricarboxylic acid cycle; isocitrate from oxaloacetate: step 2/2. Its pathway is organic acid metabolism; propanoate degradation. Functionally, involved in the catabolism of short chain fatty acids (SCFA) via the tricarboxylic acid (TCA)(acetyl degradation route) and probably the 2-methylcitrate cycle I (propionate degradation route). Catalyzes the reversible isomerization of citrate to isocitrate via cis-aconitate. Could catalyze the hydration of 2-methyl-cis-aconitate to yield (2R,3S)-2-methylisocitrate. The apo form of AcnA functions as a RNA-binding regulatory protein. The polypeptide is Aconitate hydratase A (acnA) (Staphylococcus epidermidis (strain ATCC 12228 / FDA PCI 1200)).